Here is a 278-residue protein sequence, read N- to C-terminus: OX-2 membrane glycoprotein (278 aa).

Residues 1–30 (MERLVIRMPFSHLSTYSLVWVMAAVVLCTA) form the signal peptide. Positions 31 to 141 (QVQVVTQDER…SGTACLTVYV (111 aa)) constitute an Ig-like V-type domain. Topologically, residues 31–232 (QVQVVTQDER…TDFKQTVNKG (202 aa)) are extracellular. 2 disulfide bridges follow: cysteine 51–cysteine 121 and cysteine 118–cysteine 136. Asparagine 95, asparagine 103, and asparagine 110 each carry an N-linked (GlcNAc...) asparagine glycan. Residues 142–232 (QPIVSLHYKF…TDFKQTVNKG (91 aa)) form the Ig-like C2-type domain. Residues asparagine 157, asparagine 181, and asparagine 190 are each glycosylated (N-linked (GlcNAc...) asparagine). Cysteine 160 and cysteine 214 are joined by a disulfide. The chain crosses the membrane as a helical span at residues 233–259 (YWFSVPLLLSIVSLVILLVLISILLYW). At 260–278 (KRHRNQDRGELSQGVQKMT) the chain is on the cytoplasmic side.

As to quaternary structure, CD200 and CD200R1 interact via their respective N-terminal Ig-like domains.

The protein resides in the cell membrane. Functionally, costimulates T-cell proliferation. May regulate myeloid cell activity in a variety of tissues. The polypeptide is OX-2 membrane glycoprotein (CD200) (Homo sapiens (Human)).